A 215-amino-acid chain; its full sequence is UPF0502 protein CKO_01995 (215 aa).

Belongs to the UPF0502 family.

The polypeptide is UPF0502 protein CKO_01995 (Citrobacter koseri (strain ATCC BAA-895 / CDC 4225-83 / SGSC4696)).